We begin with the raw amino-acid sequence, 139 residues long: Holo-[acyl-carrier-protein] synthase (139 aa).

2 residues coordinate Mg(2+): aspartate 8 and glutamate 61.

It belongs to the P-Pant transferase superfamily. AcpS family. It depends on Mg(2+) as a cofactor.

The protein localises to the cytoplasm. The catalysed reaction is apo-[ACP] + CoA = holo-[ACP] + adenosine 3',5'-bisphosphate + H(+). Its function is as follows. Transfers the 4'-phosphopantetheine moiety from coenzyme A to a Ser of acyl-carrier-protein. The polypeptide is Holo-[acyl-carrier-protein] synthase (Bradyrhizobium diazoefficiens (strain JCM 10833 / BCRC 13528 / IAM 13628 / NBRC 14792 / USDA 110)).